The following is a 120-amino-acid chain: SAGA-associated factor 11 (120 aa).

The span at 40 to 60 (SLLNSSNSNTNSNTNGTIASN) shows a compositional bias: low complexity. Residues 40 to 82 (SLLNSSNSNTNSNTNGTIASNGGNGTTSDENNEIENSTIQDKS) are disordered. Residues 93 to 114 (FRCLNCGRNIAGGRFASHISKC) form an SGF11-type zinc finger.

Belongs to the SGF11 family. As to quaternary structure, component of the 1.8 MDa SAGA transcription coactivator-HAT complex. SAGA is built of 5 distinct domains with specialized functions. Within the SAGA complex, SUS1, SGF11, SGF73 and UBP8 form an additional subcomplex of SAGA called the DUB module (deubiquitination module). Interacts directly with SGF73, SUS1 and UBP8.

Its subcellular location is the nucleus. Functions as a component of the transcription regulatory histone acetylation (HAT) complex SAGA. At the promoters, SAGA is required for recruitment of the basal transcription machinery. It influences RNA polymerase II transcriptional activity through different activities such as TBP interaction and promoter selectivity, interaction with transcription activators, and chromatin modification through histone acetylation and deubiquitination. SAGA acetylates nucleosomal histone H3 to some extent (to form H3K9ac, H3K14ac, H3K18ac and H3K23ac). SAGA interacts with DNA via upstream activating sequences (UASs). Involved in transcriptional regulation of a subset of SAGA-regulated genes. Within the SAGA complex, participates in a subcomplex, that specifically deubiquitinates histones H2B. This Candida albicans (strain SC5314 / ATCC MYA-2876) (Yeast) protein is SAGA-associated factor 11.